The sequence spans 279 residues: Cell death abnormality protein 2 (279 aa).

The 102-residue stretch at 14–115 folds into the SH2 domain; that stretch reads FYFPGMSREE…EASLLAAYKK (102 aa). An SH3 1 domain is found at 116 to 176; sequence PIIEVVVGTF…PANYVQIQME (61 aa). A disordered region spans residues 181-213; sequence RTSKGASQSSIGSSGGGAERFSSASTSSDNIEL. Residues 202–211 are compositionally biased toward polar residues; that stretch reads SSASTSSDNI. The SH3 2 domain maps to 214 to 277; that stretch reads QPRLPAKAKV…PHTYLRFTAV (64 aa).

It belongs to the CRK family. As to quaternary structure, interacts with ced-5 (via C-terminus which contains a candidate SH3-binding, proline-rich region). Forms a ternary complex with ced-5 and ced-12. Interacts (via SH2 domain) with src-1 (when activated and phosphorylated at 'Tyr-416').

Its function is as follows. Required for cell migration and engulfment of cell corpses but not for programmed cell death/apoptosis. Has a role in the migration of the 2 gonadal distal tip cells (DTCs). Plays a role in protecting dopaminergic neurons from oxidative stress-induced degeneration. The polypeptide is Cell death abnormality protein 2 (Caenorhabditis elegans).